The following is a 386-amino-acid chain: Putative 8-amino-7-oxononanoate synthase (386 aa).

Arginine 22 is a substrate binding site. 109–110 serves as a coordination point for pyridoxal 5'-phosphate; that stretch reads GY. Histidine 134 serves as a coordination point for substrate. Residues serine 182, 207-210, and 238-241 contribute to the pyridoxal 5'-phosphate site; these read DEAH and TLSK. Lysine 241 carries the N6-(pyridoxal phosphate)lysine modification. Threonine 356 contributes to the substrate binding site.

It belongs to the class-II pyridoxal-phosphate-dependent aminotransferase family. BioF subfamily. In terms of assembly, homodimer. Pyridoxal 5'-phosphate serves as cofactor.

The enzyme catalyses 6-carboxyhexanoyl-[ACP] + L-alanine + H(+) = (8S)-8-amino-7-oxononanoate + holo-[ACP] + CO2. The protein operates within cofactor biosynthesis; biotin biosynthesis. Its function is as follows. Catalyzes the decarboxylative condensation of pimeloyl-[acyl-carrier protein] and L-alanine to produce 8-amino-7-oxononanoate (AON), [acyl-carrier protein], and carbon dioxide. This is Putative 8-amino-7-oxononanoate synthase (bioF) from Trichormus variabilis (strain ATCC 29413 / PCC 7937) (Anabaena variabilis).